Reading from the N-terminus, the 111-residue chain is Nucleoid-associated protein CYB_2894 (111 aa).

This sequence belongs to the YbaB/EbfC family. In terms of assembly, homodimer.

Its subcellular location is the cytoplasm. It localises to the nucleoid. Binds to DNA and alters its conformation. May be involved in regulation of gene expression, nucleoid organization and DNA protection. This Synechococcus sp. (strain JA-2-3B'a(2-13)) (Cyanobacteria bacterium Yellowstone B-Prime) protein is Nucleoid-associated protein CYB_2894.